Reading from the N-terminus, the 128-residue chain is Large ribosomal subunit protein uL22 (128 aa).

It belongs to the universal ribosomal protein uL22 family. Part of the 50S ribosomal subunit.

This protein binds specifically to 23S rRNA; its binding is stimulated by other ribosomal proteins, e.g. L4, L17, and L20. It is important during the early stages of 50S assembly. It makes multiple contacts with different domains of the 23S rRNA in the assembled 50S subunit and ribosome. In terms of biological role, the globular domain of the protein is located near the polypeptide exit tunnel on the outside of the subunit, while an extended beta-hairpin is found that lines the wall of the exit tunnel in the center of the 70S ribosome. This chain is Large ribosomal subunit protein uL22, found in Rhodopseudomonas palustris (strain BisA53).